Here is a 665-residue protein sequence, read N- to C-terminus: Beta-galactosidase LacZ (665 aa).

Arg110 lines the substrate pocket. A Zn(2+)-binding site is contributed by Cys114. Residue Asn148 participates in substrate binding. Glu149 serves as the catalytic Proton donor. Zn(2+) is bound by residues Cys157, Cys159, and Cys162. Glu303 (nucleophile) is an active-site residue. Substrate-binding positions include Trp311 and 351–354; that span reads EKFH.

The protein belongs to the glycosyl hydrolase 42 family.

The catalysed reaction is Hydrolysis of terminal non-reducing beta-D-galactose residues in beta-D-galactosides.. This Heyndrickxia coagulans (Weizmannia coagulans) protein is Beta-galactosidase LacZ.